A 312-amino-acid chain; its full sequence is Serine/threonine-protein phosphatase CPPED1 (312 aa).

A Phosphoserine modification is found at S2. The tract at residues 47-250 (KAWSTGNCDN…AVFSGHYHRN (204 aa)) is catalytic. A divalent metal cation is bound by residues D90, N127, and H246. S293 is subject to Phosphoserine.

Belongs to the metallophosphoesterase superfamily. CPPED1 family. A divalent metal cation serves as cofactor.

Its subcellular location is the cytoplasm. The catalysed reaction is O-phospho-L-seryl-[protein] + H2O = L-seryl-[protein] + phosphate. It catalyses the reaction O-phospho-L-threonyl-[protein] + H2O = L-threonyl-[protein] + phosphate. In terms of biological role, protein phosphatase that dephosphorylates AKT family kinase specifically at 'Ser-473', blocking cell cycle progression and promoting cell apoptosis. May play an inhibitory role in glucose uptake by adipocytes. This chain is Serine/threonine-protein phosphatase CPPED1 (Cpped1), found in Rattus norvegicus (Rat).